The chain runs to 920 residues: Puromycin-sensitive aminopeptidase (920 aa).

Residues Glu181 and 317 to 321 (GAMEN) contribute to the substrate site. His353 is a binding site for Zn(2+). Residue Glu354 is the Proton acceptor of the active site. His357 and Glu376 together coordinate Zn(2+). Tyr465 bears the 3'-nitrotyrosine mark. Positions 727 to 731 (RRRFK) match the Nuclear localization signal motif.

This sequence belongs to the peptidase M1 family. In terms of assembly, monomer. The cofactor is Zn(2+). Widely expressed. Highest expression in brain, particularly the striatum and hippocampus. Expressed in Sertoli cells.

Its subcellular location is the cytoplasm. The protein localises to the cytosol. It is found in the nucleus. It catalyses the reaction Release of an N-terminal amino acid, preferentially alanine, from a wide range of peptides, amides and arylamides.. Its activity is regulated as follows. Strongly inhibited by bestatin, leuhistin, actinonin, amastatin, 1,10-phenanthroline, DFP, PCMBS, Zn(2+), Cd(2+), Co(2+), Cu(2+), Hg(2+), EDTA and puromycin. Not inhibited by PMSF, and only slightly inhibited by leupeptin and aprotinin. Activity is increased by Mg(2+) and Ca(2+). Its function is as follows. Aminopeptidase with broad substrate specificity for several peptides. Involved in proteolytic events essential for cell growth and viability. May act as regulator of neuropeptide activity. Plays a role in the antigen-processing pathway for MHC class I molecules. Involved in the N-terminal trimming of cytotoxic T-cell epitope precursors. Digests the poly-Q peptides found in many cellular proteins. The protein is Puromycin-sensitive aminopeptidase (Npepps) of Mus musculus (Mouse).